Reading from the N-terminus, the 564-residue chain is MTEHHNSDPRLDTTREIRAPHGTTLRAKSWLTEAPLRMLMNNLDPDVAEHPHALVVYGGIGRAARDWKCYDKIVEVLERLEDDQTLLVQSGKPVGVFPTHKNAPRVLIANSNLVPHWANWEHFNELDKEGLMMYGQMTAGSWIYIGSQGIVQGTYETFVAIAKKHFQGEANGKWVLTGGLGGMGGAQPLAATMAGFSMIAVECDESRIDYRLRTGYVDRKATSIDEAMAMIKESDTPISVGLLGNAADVFPELVERNITPDVVTDQTSAHDPLNGYLPQGWTMEKAAQERTIDEAKVVKAAKQSMAIQVQAMLDLQYRGAATVDYGNNIRQMALEEGVENAFDFPGFVPAYIRPLFCEGVGPFRWAALSGDPEDIYKTDQKVKELIPDNPHLHNWLDMARERIQFQGLPARICWVGLKDRERLGQAFNEMVKNGELKAPVVIGRDHLDSGSVASPNRETEGMMDGSDAVSDWPLLNALLNTAGGATWVSLHHGGGVGMGFSQHSGMVICCDGSEDASQRISRVLHNDPATGVMRHADAGYDIAKQCAKEQKLDLPMLNEELRRL.

NAD(+)-binding positions include 58–59 (GG), Gln136, 182–184 (GMG), Glu202, Arg207, 245–246 (NA), 266–270 (QTSAH), 276–277 (YL), and Tyr325. Cys413 is an active-site residue. Position 495 (Gly495) interacts with NAD(+).

This sequence belongs to the urocanase family. The cofactor is NAD(+).

Its subcellular location is the cytoplasm. It catalyses the reaction 4-imidazolone-5-propanoate = trans-urocanate + H2O. Its pathway is amino-acid degradation; L-histidine degradation into L-glutamate; N-formimidoyl-L-glutamate from L-histidine: step 2/3. Its function is as follows. Catalyzes the conversion of urocanate to 4-imidazolone-5-propionate. This Vibrio atlanticus (strain LGP32) (Vibrio splendidus (strain Mel32)) protein is Urocanate hydratase.